The following is a 98-amino-acid chain: Integration host factor subunit beta (98 aa).

Belongs to the bacterial histone-like protein family. In terms of assembly, heterodimer of an alpha and a beta chain.

Functionally, this protein is one of the two subunits of integration host factor, a specific DNA-binding protein that functions in genetic recombination as well as in transcriptional and translational control. The chain is Integration host factor subunit beta from Pseudomonas fluorescens (strain SBW25).